The primary structure comprises 147 residues: Cytochrome c' (147 aa).

An N-terminal signal peptide occupies residues 1-21 (MKRMMIVAALAALTTTTVAQA). Heme c-binding residues include R31, T87, E88, C137, C140, and H141.

In terms of assembly, homodimer. Post-translationally, binds 1 heme c group covalently per subunit.

Cytochrome c' is the most widely occurring bacterial c-type cytochrome. Cytochromes c' are high-spin proteins and the heme has no sixth ligand. Their exact function is not known. This chain is Cytochrome c', found in Rhodospirillum rubrum (strain ATCC 11170 / ATH 1.1.1 / DSM 467 / LMG 4362 / NCIMB 8255 / S1).